The chain runs to 493 residues: Glutamate--tRNA ligase (493 aa).

Residues 10-20 (PSPTGDPHVGT) carry the 'HIGH' region motif. A 'KMSKS' region motif is present at residues 251–255 (KLSKR). Lysine 254 serves as a coordination point for ATP.

This sequence belongs to the class-I aminoacyl-tRNA synthetase family. Glutamate--tRNA ligase type 1 subfamily. Monomer.

It localises to the cytoplasm. It catalyses the reaction tRNA(Glu) + L-glutamate + ATP = L-glutamyl-tRNA(Glu) + AMP + diphosphate. Catalyzes the attachment of glutamate to tRNA(Glu) in a two-step reaction: glutamate is first activated by ATP to form Glu-AMP and then transferred to the acceptor end of tRNA(Glu). This Pseudomonas savastanoi pv. phaseolicola (strain 1448A / Race 6) (Pseudomonas syringae pv. phaseolicola (strain 1448A / Race 6)) protein is Glutamate--tRNA ligase.